The following is a 618-amino-acid chain: Prothrombin (618 aa).

An N-terminal signal peptide occupies residues 1–24 (MSHVRGLGLPGCLALAALVSLVHS). A propeptide spanning residues 25 to 43 (QHVFLAPQQALSLLQRVRR) is cleaved from the precursor. The 47-residue stretch at 44-90 (ANSGFLEELRKGNLERECVEEQCSYEEAFEALESPQDTDVFWAKYTV) folds into the Gla domain. Residues Glu50, Glu51, Glu58, Glu60, Glu63, Glu64, Glu69, Glu70, Glu73, and Glu76 each carry the 4-carboxyglutamate modification. Cys61 and Cys66 form a disulfide bridge. 10 disulfide bridges follow: Cys91–Cys104, Cys109–Cys187, Cys130–Cys170, Cys158–Cys182, Cys215–Cys293, Cys236–Cys276, Cys264–Cys288, Cys333–Cys479, Cys388–Cys404, and Cys533–Cys547. 2 consecutive Kringle domains span residues 109 to 187 (CAMD…VPVC) and 215 to 292 (CLTE…NLNY). Asn122 and Asn144 each carry an N-linked (GlcNAc...) asparagine glycan. In terms of domain architecture, Peptidase S1 spans 361 to 615 (IVEGWDAEKG…LKRWIQKVID (255 aa)). His403 serves as the catalytic Charge relay system. A glycan (N-linked (GlcNAc...) asparagine) is linked at Asn413. Catalysis depends on Asp459, which acts as the Charge relay system. The segment at 548 to 570 (AGFKVNDTKRGDACEGDSGGPFV) is high affinity receptor-binding region which is also known as the TP508 peptide. The N-linked (GlcNAc...) asparagine glycan is linked to Asn553. Cys561 and Cys591 are oxidised to a cystine. The Charge relay system role is filled by Ser565.

The protein belongs to the peptidase S1 family. Heterodimer (named alpha-thrombin) of a light and a heavy chain; disulfide-linked. Forms a heterodimer with SERPINA5. In plasma, interacts (via N-terminus) with alpha-1-microglobulin; this interaction does not prevent the activation of prothrombin to thrombin. In terms of processing, the gamma-carboxyglutamyl residues, which bind calcium ions, result from the carboxylation of glutamyl residues by a microsomal enzyme, the vitamin K-dependent carboxylase. The modified residues are necessary for the calcium-dependent interaction with a negatively charged phospholipid surface, which is essential for the conversion of prothrombin to thrombin. Post-translationally, in the penultimate step of the coagulation cascade, prothrombin is converted to thrombin by the prothrombinase complex composed of factor Xa (F10), cofactor Va (F5), and phospholipids. This activation requires factor Xa-catalyzed sequential cleavage at 2 sites, Arg-311 and Arg-360, along 2 possible pathways. In the first pathway, the first cleavage occurs at Arg-311, leading to the formation of the inactive intermediate prethrombin-2. This pathway preferentially occurs on platelets and in the absence of cofactor Va. In the second pathway, the first cleavage occurs at Arg-360, which separates protease domain into 2 chains that remain connected through a disulfide bond and generates the active intermediate meizothrombin. The presence of cofactor Va directs activation along the meizothrombin pathway and greatly accelerates the rate of cleavage at Arg-360, but has a smaller effect on the cleavage of meizothrombin at Arg-311. Meizothrombin accumulates as an intermediate when prothrombinase is assembled on the membrane of red blood cells.

It catalyses the reaction Selective cleavage of Arg-|-Gly bonds in fibrinogen to form fibrin and release fibrinopeptides A and B.. With respect to regulation, activity is promoted in the presence of negatively charged surfaces, such as polyphosphate and dextran sulfate. Inhibited by SERPINA5. Its function is as follows. Thrombin, which cleaves bonds after Arg and Lys, converts fibrinogen to fibrin and activates factors V, VII, VIII, XIII, and, in complex with thrombomodulin, protein C. Functions in blood homeostasis, inflammation and wound healing. Activates coagulation factor XI (F11); activation is promoted by the contact with negatively charged surfaces. Triggers the production of pro-inflammatory cytokines, such as MCP-1/CCL2 and IL8/CXCL8, in endothelial cells. The protein is Prothrombin (F2) of Mus musculus (Mouse).